The sequence spans 208 residues: Small ribosomal subunit protein uS4 (208 aa).

An S4 RNA-binding domain is found at 98-161 (RRLDNVVYRL…RKSKRFKEVF (64 aa)).

Belongs to the universal ribosomal protein uS4 family. As to quaternary structure, part of the 30S ribosomal subunit. Contacts protein S5. The interaction surface between S4 and S5 is involved in control of translational fidelity.

Functionally, one of the primary rRNA binding proteins, it binds directly to 16S rRNA where it nucleates assembly of the body of the 30S subunit. In terms of biological role, with S5 and S12 plays an important role in translational accuracy. This Halothermothrix orenii (strain H 168 / OCM 544 / DSM 9562) protein is Small ribosomal subunit protein uS4.